We begin with the raw amino-acid sequence, 953 residues long: Glutamate receptor 3.5 (953 aa).

An N-terminal signal peptide occupies residues Met-1–Gly-29. Over Ala-30 to Thr-606 the chain is Extracellular. Residues Asn-38, Asn-95, Asn-223, Asn-371, Asn-397, Asn-436, Asn-454, and Asn-569 are each glycosylated (N-linked (GlcNAc...) asparagine). The helical transmembrane segment at Ile-607–Leu-627 threads the bilayer. Topologically, residues Glu-628 to Arg-636 are cytoplasmic. Residues Gly-637 to Ser-657 form a helical membrane-spanning segment. Residues His-658–Arg-668 lie on the Cytoplasmic side of the membrane. The helical transmembrane segment at Phe-669–Leu-689 threads the bilayer. Residues Thr-690–Ser-850 lie on the Extracellular side of the membrane. A helical membrane pass occupies residues Phe-851 to Trp-871. Residues Lys-872–Gln-953 lie on the Cytoplasmic side of the membrane. Residues Glu-928–Gln-953 form a disordered region.

The protein belongs to the glutamate-gated ion channel (TC 1.A.10.1) family. As to quaternary structure, may form heteromers. As to expression, expressed predominantly in roots. Also detected in shoots.

It localises to the membrane. Functionally, glutamate-gated receptor that probably acts as a non-selective cation channel. May be involved in light-signal transduction and calcium homeostasis via the regulation of calcium influx into cells. The chain is Glutamate receptor 3.5 (GLR3.5) from Arabidopsis thaliana (Mouse-ear cress).